We begin with the raw amino-acid sequence, 259 residues long: Imidazole glycerol phosphate synthase subunit HisF (259 aa).

Active-site residues include D11 and D130.

The protein belongs to the HisA/HisF family. As to quaternary structure, heterodimer of HisH and HisF.

It localises to the cytoplasm. It catalyses the reaction 5-[(5-phospho-1-deoxy-D-ribulos-1-ylimino)methylamino]-1-(5-phospho-beta-D-ribosyl)imidazole-4-carboxamide + L-glutamine = D-erythro-1-(imidazol-4-yl)glycerol 3-phosphate + 5-amino-1-(5-phospho-beta-D-ribosyl)imidazole-4-carboxamide + L-glutamate + H(+). It participates in amino-acid biosynthesis; L-histidine biosynthesis; L-histidine from 5-phospho-alpha-D-ribose 1-diphosphate: step 5/9. Its function is as follows. IGPS catalyzes the conversion of PRFAR and glutamine to IGP, AICAR and glutamate. The HisF subunit catalyzes the cyclization activity that produces IGP and AICAR from PRFAR using the ammonia provided by the HisH subunit. This is Imidazole glycerol phosphate synthase subunit HisF from Shewanella amazonensis (strain ATCC BAA-1098 / SB2B).